A 562-amino-acid chain; its full sequence is Potassium-transporting ATPase potassium-binding subunit (562 aa).

10 helical membrane passes run 5-25, 63-83, 132-152, 175-195, 250-270, 279-299, 379-399, 416-436, 483-503, and 526-546; these read AFLL…PLGS, AAAI…LLMA, GLTV…FALI, LYVL…QGVL, LSNI…CFAF, QGHA…AVVM, GLYG…LMIG, MTAL…ALAL, VLLA…VLAI, and LFIG…FIPA.

It belongs to the KdpA family. As to quaternary structure, the system is composed of three essential subunits: KdpA, KdpB and KdpC.

The protein localises to the cell inner membrane. In terms of biological role, part of the high-affinity ATP-driven potassium transport (or Kdp) system, which catalyzes the hydrolysis of ATP coupled with the electrogenic transport of potassium into the cytoplasm. This subunit binds the periplasmic potassium ions and delivers the ions to the membrane domain of KdpB through an intramembrane tunnel. This chain is Potassium-transporting ATPase potassium-binding subunit, found in Pectobacterium atrosepticum (strain SCRI 1043 / ATCC BAA-672) (Erwinia carotovora subsp. atroseptica).